Reading from the N-terminus, the 129-residue chain is UPF0325 protein YPTS_3127 (129 aa).

The protein belongs to the UPF0325 family.

The protein is UPF0325 protein YPTS_3127 of Yersinia pseudotuberculosis serotype IB (strain PB1/+).